The primary structure comprises 750 residues: MWKLLPAASAAPGEPCRLLAGVEYIVGRKNCAILIENDQSISRNHAVLRVNFPVTSLSQTDEIPTLTIKDNSKYGTFINEEKMQNGLSSTLKTGDRVTFGVFESKFRVEYEPLVVCSSCLDVSGKTVLNQAILQLGGLTANSWTEECTHLAMSSVKVTIKTICALICGRPIVKPEYFSEFLKAVESKTQPPEIESFYPPIDEPAIGNKSVDLSGRRERKQIFKGKTFVFLNAKQHKKLGSAVVFGGGEARLMAEGGEEEQSFFSAPGTCVVDVGITNTQLIITDSQRKWIHLIMDILQRHGLRPIPEAEIGLAVIFMTTESYCNPQGQPCTEVKTTTPGPSLSQGLSANGKVIPSAPMNMTTYVADTESEPADTCMSLSERPEEVKIFGLDQNSRKLLQGTCNIKETSNQSSNSNNAASNTLVRGKAPNYQLSPMKCPAASKNKDWSSQQQLNSIKNYFQPCSRKRERDEENPEQSSCKSSRVELSCSLLEQTQPAGPSLWKSKDHESQSETLDRASNASSVGGIDIKPNGKSPDSKSFSTEDLRARKRKEVDLSTEEEVLEELLRSTKPELAVQVKVEKQEADVSIRKKPRMDAERNQHLNGGPVPESNSALQEDETGKKDELQIEAWSTKREVSNTDELQDSSEELPRKLLLTEFRSLVVHNNSSRNLCVLNGRGELKNFKKFKKATCPGAGKLPHIIGGSDLIGHHARKNTELEEWLKHEMEVQKQQAKEDSLADDLFRYNPNVKRR.

The 60-residue stretch at Tyr-24 to Met-83 folds into the FHA domain. 2 consecutive BRCT domains span residues Lys-105 to Leu-181 and Gly-224 to Ile-315. The tract at residues Glu-111–Gln-328 is mediates interaction with SP100. An interaction with MTOR, MAPKAP1 and RICTOR region spans residues Ile-221–Asn-403. Residue Thr-337 is modified to Phosphothreonine. A Phosphoserine; by ATM modification is found at Ser-343. Phosphoserine occurs at positions 347 and 433. Disordered stretches follow at residues Asn-429–Lys-479 and Gln-494–Lys-550. Lys-436 is covalently cross-linked (Glycyl lysine isopeptide (Lys-Gly) (interchain with G-Cter in ubiquitin)). A compositionally biased stretch (polar residues) spans Trp-446–Asn-457. The Nuclear localization signal motif lies at Pro-461–Glu-467. Over residues Lys-502 to Asp-514 the composition is skewed to basic and acidic residues. A phosphoserine mark is found at Ser-508 and Ser-517. A Glycyl lysine isopeptide (Lys-Gly) (interchain with G-Cter in SUMO2) cross-link involves residue Lys-528. Basic and acidic residues predominate over residues Ser-540–Lys-550. Residues Lys-569 and Lys-580 each participate in a glycyl lysine isopeptide (Lys-Gly) (interchain with G-Cter in SUMO2) cross-link. Over residues Gln-581–Gln-599 the composition is skewed to basic and acidic residues. Positions Gln-581 to Asp-622 are disordered. Residues Lys-683, Lys-687, and Lys-732 each participate in a glycyl lysine isopeptide (Lys-Gly) (interchain with G-Cter in ubiquitin) cross-link. The FxF/Y motif signature appears at Ala-737–Asn-746.

It belongs to the Nibrin family. Component of the MRN complex composed of two heterodimers RAD50 and MRE11 associated with a single NBN. The MRN complexes dimerize on DNA to form joined MRN-MRN oligomers required for DNA double-strand break repair. The MRN complexes dimerize on DNA to form joined MRN-MRN oligomers required for DNA double-strand break repair. As part of the MRN complex, interacts with MCM9; the interaction recruits the complex to DNA repair sites. Component of the BASC complex, at least composed of BRCA1, MSH2, MSH6, MLH1, ATM, BLM, RAD50, MRE11 and NBN. Interacts with histone H2AX; this requires phosphorylation of H2AX on 'Ser-139' and promotes NBN recruitment to DNA damage sites. Interacts with (phosphorylated) MDC1; promoting NBN recruitment to DNA damage sites. Interacts with (phosphorylated) RAD17; promoting NBN recruitment to DNA damage sites. Interacts (via FxF/Y motif) with ATM. Interacts with HJURP. Interacts with INTS3. Interacts with KPNA2. Interacts with TERF2; interaction is disrupted upon NBN phosphorylation by CDK2. Interacts with (phosphorylated) RBBP8/CtIP; the interaction links the role of the MRN complex in DNA double-strand break sensing to resection. Interacts with SP100; recruits NBN to PML bodies. Interacts with ATF2. Interacts with MTOR, MAPKAP1 isoform 2 and RICTOR; indicative for an association with the mTORC2 complex. Interacts with MRNIP. Interacts with UFL1; promoting UFL1 recruitment to double-strand breaks following DNA damage. Interacts with CYREN (via XLF motif). Phosphorylated by ATM in response of ionizing radiation, and such phosphorylation is responsible intra-S phase checkpoint control and telomere maintenance. Phosphorylated at Ser-433 by CDK2 in S/G2 phases abolishes interaction with TERF2, enabling DCLRE1B/Apollo recruitment to telomeres. Phosphorylation at Ser-433 in response to dysfunctional telomeres promotes non-homologous end joining repair at telomeres, while dephosphorylation by PPP1CA promotes microhomology-mediated end-joining (MMEJ) repair. Post-translationally, ubiquitinated at Lys-436 via 'Lys-6'-linked ubiquitin chains by RNF8, promoting NBN recruitment to DNA double-strand breaks (DSBs). Ubiquitinated at Lys-687 via 'Lys-63'-linked ubiquitin chains by PELI1: ubiquitination takes place following PELI1 phosphorylation and promotes ATM activation and DNA repair. Ubiquitinated at Lys-732 via 'Lys-63'-linked ubiquitin chains by the SCF(SKP2) complex: ubiquitination takes place following SKP2 phosphorylation and promotes ATM activation and DNA repair. As to expression, present at approximately equal levels in the heart at fetal day 17, at relatively constant levels at postnatal days 10, 17 and 21 and at slightly lower levels in the adult heart. Barely detectable in the brain. Not detected in kidney, very low levels in liver and skeletal muscle and moderate levels in heart, lung and brain (at protein level).

It is found in the nucleus. Its subcellular location is the chromosome. It localises to the PML body. The protein localises to the telomere. Component of the MRN complex, which plays a central role in double-strand break (DSB) repair, DNA recombination, maintenance of telomere integrity and meiosis. The MRN complex is involved in the repair of DNA double-strand breaks (DSBs) via homologous recombination (HR), an error-free mechanism which primarily occurs during S and G2 phases. The complex (1) mediates the end resection of damaged DNA, which generates proper single-stranded DNA, a key initial steps in HR, and is (2) required for the recruitment of other repair factors and efficient activation of ATM and ATR upon DNA damage. The MRN complex possesses single-strand endonuclease activity and double-strand-specific 3'-5' exonuclease activity, which are provided by MRE11, to initiate end resection, which is required for single-strand invasion and recombination. Within the MRN complex, NBN acts as a protein-protein adapter, which specifically recognizes and binds phosphorylated proteins, promoting their recruitment to DNA damage sites. Recruits MRE11 and RAD50 components of the MRN complex to DSBs in response to DNA damage. Promotes the recruitment of PI3/PI4-kinase family members ATM, ATR, and probably DNA-PKcs to the DNA damage sites, activating their functions. Mediates the recruitment of phosphorylated RBBP8/CtIP to DSBs, leading to cooperation between the MRN complex and RBBP8/CtIP to initiate end resection. RBBP8/CtIP specifically promotes the endonuclease activity of the MRN complex to clear DNA ends containing protein adducts. The MRN complex is also required for the processing of R-loops. NBN also functions in telomere length maintenance via its interaction with TERF2: interaction with TERF2 during G1 phase preventing recruitment of DCLRE1B/Apollo to telomeres. NBN also promotes DNA repair choice at dysfunctional telomeres: NBN phosphorylation by CK2 promotes non-homologous end joining repair at telomeres, while unphosphorylated NBN promotes microhomology-mediated end-joining (MMEJ) repair. Enhances AKT1 phosphorylation possibly by association with the mTORC2 complex. The polypeptide is Nibrin (Nbn) (Rattus norvegicus (Rat)).